Here is a 231-residue protein sequence, read N- to C-terminus: Aquaporin Z (231 aa).

The next 2 helical transmembrane spans lie at 9–29 (CFGTFWLVFGGCGSAVLAAGF) and 34–54 (IGFAGVALAFGLTVLTMAFAV). Positions 63–65 (NPA) match the NPA 1 motif. The next 3 membrane-spanning stretches (helical) occupy residues 82–102 (VGYVIAQVVGGIVAAALLYLI), 129–149 (YSMLSALVVELVLSAGFLLVI), and 156–176 (FAPAGFAPIAIGLALTLIHLI). The NPA 2 signature appears at 186 to 188 (NPA). The helical transmembrane segment at 202–222 (LEQLWFFWVVPIVGGIIGGLI) threads the bilayer.

It belongs to the MIP/aquaporin (TC 1.A.8) family. As to quaternary structure, homotetramer.

It localises to the cell inner membrane. The catalysed reaction is H2O(in) = H2O(out). In terms of biological role, channel that permits osmotically driven movement of water in both directions. It is involved in the osmoregulation and in the maintenance of cell turgor during volume expansion in rapidly growing cells. It mediates rapid entry or exit of water in response to abrupt changes in osmolarity. This Escherichia coli O157:H7 protein is Aquaporin Z.